We begin with the raw amino-acid sequence, 467 residues long: Replication factor C large subunit (467 aa).

Glycine 47 to threonine 54 is an ATP binding site.

It belongs to the activator 1 small subunits family. RfcL subfamily. As to quaternary structure, heteromultimer composed of small subunits (RfcS) and large subunits (RfcL).

In terms of biological role, part of the RFC clamp loader complex which loads the PCNA sliding clamp onto DNA. The polypeptide is Replication factor C large subunit (Methanothrix thermoacetophila (strain DSM 6194 / JCM 14653 / NBRC 101360 / PT) (Methanosaeta thermophila)).